We begin with the raw amino-acid sequence, 181 residues long: Oligoribonuclease (181 aa).

Positions 8-171 (LIWLDLEMTG…DDIKDSIMEL (164 aa)) constitute an Exonuclease domain. Residue tyrosine 129 is part of the active site.

It belongs to the oligoribonuclease family.

It localises to the cytoplasm. Functionally, 3'-to-5' exoribonuclease specific for small oligoribonucleotides. The polypeptide is Oligoribonuclease (Pseudoalteromonas translucida (strain TAC 125)).